The sequence spans 766 residues: 5-methyltetrahydropteroyltriglutamate--homocysteine methyltransferase 1 (766 aa).

Residues Lys18 and Asn116 each contribute to the 5-methyltetrahydropteroyltri-L-glutamate site. L-homocysteine contacts are provided by residues 438 to 440 (IGS) and Glu491. L-methionine-binding positions include 438 to 440 (IGS) and Glu491. 5-methyltetrahydropteroyltri-L-glutamate-binding positions include Asp496, Tyr519, 522–523 (RC), and Trp568. Position 606 (Asp606) interacts with L-homocysteine. Residue Asp606 participates in L-methionine binding. 4 residues coordinate Zn(2+): His648, Cys650, His659, and Glu672. Catalysis depends on His702, which acts as the Proton donor. Residue Cys734 coordinates Zn(2+).

This sequence belongs to the vitamin-B12 independent methionine synthase family. Zn(2+) serves as cofactor.

It is found in the cytoplasm. It localises to the cytosol. It catalyses the reaction 5-methyltetrahydropteroyltri-L-glutamate + L-homocysteine = tetrahydropteroyltri-L-glutamate + L-methionine. Its pathway is amino-acid biosynthesis; L-methionine biosynthesis via de novo pathway; L-methionine from L-homocysteine (MetE route): step 1/1. Its function is as follows. Catalyzes the transfer of a methyl group from 5-methyltetrahydrofolate to homocysteine resulting in methionine formation. This chain is 5-methyltetrahydropteroyltriglutamate--homocysteine methyltransferase 1, found in Oryza sativa subsp. japonica (Rice).